The sequence spans 253 residues: Ribosome-inactivating protein saporin-9 (253 aa).

The active site involves Glu176.

It catalyses the reaction Endohydrolysis of the N-glycosidic bond at one specific adenosine on the 28S rRNA.. Ribosome-inactivating protein of type 1, inhibits protein synthesis in animal cells. The polypeptide is Ribosome-inactivating protein saporin-9 (SAP9) (Saponaria officinalis (Common soapwort)).